The following is a 263-amino-acid chain: Nuclear egress protein 2 (263 aa).

The Perinuclear space segment spans residues 1–235; sequence MASGKKLIDQ…STSLTGRCPS (235 aa). The chain crosses the membrane as a helical span at residues 236–256; sequence WGAACALLLLSLAVGLMAILA. At 257–263 the chain is on the nuclear side; it reads AKLMQWP.

Belongs to the herpesviridae NEC2 protein family. As to quaternary structure, forms a heterohexameric complex with NEC1. In terms of processing, phosphorylated.

The protein localises to the host nucleus inner membrane. Plays an essential role in virion nuclear egress, the first step of virion release from infected cell. Within the host nucleus, NEC1 interacts with the newly formed capsid through the vertexes and directs it to the inner nuclear membrane by associating with NEC2. Induces the budding of the capsid at the inner nuclear membrane as well as its envelopment into the perinuclear space. There, the NEC1/NEC2 complex promotes the fusion of the enveloped capsid with the outer nuclear membrane and the subsequent release of the viral capsid into the cytoplasm where it will reach the secondary budding sites in the host Golgi or trans-Golgi network. This chain is Nuclear egress protein 2, found in Connochaetes taurinus (Blue wildebeest).